A 553-amino-acid chain; its full sequence is Transcriptional regulator HilA (553 aa).

The ompR/PhoB-type DNA-binding region spans 11 to 107 (NKKFVFDDFI…LYGQGYRFNR (97 aa)). A 4-aspartylphosphate modification is found at Asp-62. A TPR repeat occupies 372-405 (ADIKYYYGWNLFMAGQLEEALQTINECLKLDPTR).

Its function is as follows. The main transcriptional regulator of the Salmonella pathogenicity island 1 (SPI1) gene expression. Activates the expression of invasion genes by a direct action at their promoters and also indirectly by increasing the level of InvF. Also binds upstream of prgH and directly activates the expression of prgHIJK operon. This Salmonella typhimurium (strain LT2 / SGSC1412 / ATCC 700720) protein is Transcriptional regulator HilA (hilA).